The following is a 35-amino-acid chain: Flavodoxin (35 aa).

Positions 4 to 35 (IGLFYGTZTGKTESVAEIIDEFGDEVVTLDID) constitute a Flavodoxin-like domain.

This sequence belongs to the flavodoxin family. It depends on FMN as a cofactor.

Low-potential electron donor to a number of redox enzymes. In Nostoc sp. (strain MAC), this protein is Flavodoxin.